A 274-amino-acid chain; its full sequence is 4-hydroxy-3-methylbut-2-enyl diphosphate reductase (274 aa).

Cysteine 12 lines the [4Fe-4S] cluster pocket. Histidine 36 and histidine 70 together coordinate (2E)-4-hydroxy-3-methylbut-2-enyl diphosphate. The dimethylallyl diphosphate site is built by histidine 36 and histidine 70. Isopentenyl diphosphate contacts are provided by histidine 36 and histidine 70. Cysteine 92 contacts [4Fe-4S] cluster. Histidine 120 is a (2E)-4-hydroxy-3-methylbut-2-enyl diphosphate binding site. Dimethylallyl diphosphate is bound at residue histidine 120. Histidine 120 is a binding site for isopentenyl diphosphate. Glutamate 122 functions as the Proton donor in the catalytic mechanism. Threonine 158 is a binding site for (2E)-4-hydroxy-3-methylbut-2-enyl diphosphate. A [4Fe-4S] cluster-binding site is contributed by cysteine 186. (2E)-4-hydroxy-3-methylbut-2-enyl diphosphate is bound by residues serine 214, serine 215, asparagine 216, and serine 258. Dimethylallyl diphosphate is bound by residues serine 214, serine 215, asparagine 216, and serine 258. Isopentenyl diphosphate contacts are provided by serine 214, serine 215, asparagine 216, and serine 258.

The protein belongs to the IspH family. It depends on [4Fe-4S] cluster as a cofactor.

The catalysed reaction is isopentenyl diphosphate + 2 oxidized [2Fe-2S]-[ferredoxin] + H2O = (2E)-4-hydroxy-3-methylbut-2-enyl diphosphate + 2 reduced [2Fe-2S]-[ferredoxin] + 2 H(+). It catalyses the reaction dimethylallyl diphosphate + 2 oxidized [2Fe-2S]-[ferredoxin] + H2O = (2E)-4-hydroxy-3-methylbut-2-enyl diphosphate + 2 reduced [2Fe-2S]-[ferredoxin] + 2 H(+). The protein operates within isoprenoid biosynthesis; dimethylallyl diphosphate biosynthesis; dimethylallyl diphosphate from (2E)-4-hydroxy-3-methylbutenyl diphosphate: step 1/1. It participates in isoprenoid biosynthesis; isopentenyl diphosphate biosynthesis via DXP pathway; isopentenyl diphosphate from 1-deoxy-D-xylulose 5-phosphate: step 6/6. In terms of biological role, catalyzes the conversion of 1-hydroxy-2-methyl-2-(E)-butenyl 4-diphosphate (HMBPP) into a mixture of isopentenyl diphosphate (IPP) and dimethylallyl diphosphate (DMAPP). Acts in the terminal step of the DOXP/MEP pathway for isoprenoid precursor biosynthesis. The polypeptide is 4-hydroxy-3-methylbut-2-enyl diphosphate reductase (Campylobacter concisus (strain 13826)).